A 303-amino-acid chain; its full sequence is UDP-N-acetylenolpyruvoylglucosamine reductase (303 aa).

Residues 29–196 (KIGGPADILI…LEAVLQLEQK (168 aa)) form the FAD-binding PCMH-type domain. R174 is a catalytic residue. S225 functions as the Proton donor in the catalytic mechanism. The active site involves E295.

It belongs to the MurB family. It depends on FAD as a cofactor.

It is found in the cytoplasm. It carries out the reaction UDP-N-acetyl-alpha-D-muramate + NADP(+) = UDP-N-acetyl-3-O-(1-carboxyvinyl)-alpha-D-glucosamine + NADPH + H(+). The protein operates within cell wall biogenesis; peptidoglycan biosynthesis. Functionally, cell wall formation. This chain is UDP-N-acetylenolpyruvoylglucosamine reductase, found in Bacillus velezensis (strain DSM 23117 / BGSC 10A6 / LMG 26770 / FZB42) (Bacillus amyloliquefaciens subsp. plantarum).